Reading from the N-terminus, the 185-residue chain is Elongation factor P (185 aa).

Belongs to the elongation factor P family.

It localises to the cytoplasm. Its pathway is protein biosynthesis; polypeptide chain elongation. Functionally, involved in peptide bond synthesis. Stimulates efficient translation and peptide-bond synthesis on native or reconstituted 70S ribosomes in vitro. Probably functions indirectly by altering the affinity of the ribosome for aminoacyl-tRNA, thus increasing their reactivity as acceptors for peptidyl transferase. This is Elongation factor P (efp) from Nostoc sp. (strain PCC 7120 / SAG 25.82 / UTEX 2576).